A 256-amino-acid chain; its full sequence is DNA repair protein RecO (256 aa).

The protein belongs to the RecO family.

In terms of biological role, involved in DNA repair and RecF pathway recombination. This is DNA repair protein RecO from Delftia acidovorans (strain DSM 14801 / SPH-1).